We begin with the raw amino-acid sequence, 131 residues long: Small ribosomal subunit protein uS9 (131 aa).

The protein belongs to the universal ribosomal protein uS9 family.

The sequence is that of Small ribosomal subunit protein uS9 from Mesoplasma florum (strain ATCC 33453 / NBRC 100688 / NCTC 11704 / L1) (Acholeplasma florum).